Reading from the N-terminus, the 295-residue chain is RNA polymerase sigma-C factor (295 aa).

Residues 73-86 carry the Polymerase core binding motif; it reads DLIQEANIGLMKAV. Residues 250–269 constitute a DNA-binding region (H-T-H motif); the sequence is LSELGEHFGFSRERARQLEI.

The protein belongs to the sigma-70 factor family.

Its function is as follows. Sigma factors are initiation factors that promote the attachment of RNA polymerase to specific initiation sites and are then released. This sigma factor is essential for normal fruiting body formation. The sequence is that of RNA polymerase sigma-C factor (sigC) from Myxococcus xanthus.